Reading from the N-terminus, the 226-residue chain is Ribosomal RNA large subunit methyltransferase E (226 aa).

Positions 1–25 (MVKPPAGGNEGGRGKPARLKTAYGR) are disordered. S-adenosyl-L-methionine is bound by residues G82, W84, D100, D116, and D140. Catalysis depends on K180, which acts as the Proton acceptor.

This sequence belongs to the class I-like SAM-binding methyltransferase superfamily. RNA methyltransferase RlmE family.

Its subcellular location is the cytoplasm. The enzyme catalyses uridine(2552) in 23S rRNA + S-adenosyl-L-methionine = 2'-O-methyluridine(2552) in 23S rRNA + S-adenosyl-L-homocysteine + H(+). In terms of biological role, specifically methylates the uridine in position 2552 of 23S rRNA at the 2'-O position of the ribose in the fully assembled 50S ribosomal subunit. This Caulobacter vibrioides (strain ATCC 19089 / CIP 103742 / CB 15) (Caulobacter crescentus) protein is Ribosomal RNA large subunit methyltransferase E.